Consider the following 630-residue polypeptide: Pentatricopeptide repeat-containing protein At1g62670, mitochondrial (630 aa).

The transit peptide at 1–22 (MRISFAIASTAKRFVHRSLVVR) directs the protein to the mitochondrion. PPR repeat units follow at residues 44–79 (TSYDYREKLSRNGLSELKLDDAVALFGEMVKSRPFP), 80–114 (SIIEFSKLLSAIAKMNKFDVVISLGEQMQNLGIPH), 115–149 (NHYTYSILINCFCRRSQLPLALAVLGKMMKLGYEP), 150–184 (NIVTLSSLLNGYCHSKRISEAVALVDQMFVTGYQP), 185–219 (NTVTFNTLIHGLFLHNKASEAMALIDRMVAKGCQP), 220–254 (DLVTYGVVVNGLCKRGDTDLAFNLLNKMEQGKLEP), 255–289 (GVLIYNTIIDGLCKYKHMDDALNLFKEMETKGIRP), 290–324 (NVVTYSSLISCLCNYGRWSDASRLLSDMIERKINP), 325–359 (DVFTFSALIDAFVKEGKLVEAEKLYDEMVKRSIDP), 360–394 (SIVTYSSLINGFCMHDRLDEAKQMFEFMVSKHCFP), 395–429 (DVVTYNTLIKGFCKYKRVEEGMEVFREMSQRGLVG), 430–464 (NTVTYNILIQGLFQAGDCDMAQEIFKEMVSDGVPP), 465–499 (NIMTYNTLLDGLCKNGKLEKAMVVFEYLQRSKMEP), 500–534 (TIYTYNIMIEGMCKAGKVEDGWDLFCNLSLKGVKP), 535–569 (DVVAYNTMISGFCRKGSKEEADALFKEMKEDGTLP), and 570–604 (NSGCYNTLIRARLRDGDREASAELIKEMRSCGFAG).

The protein belongs to the PPR family. P subfamily.

Its subcellular location is the mitochondrion. The chain is Pentatricopeptide repeat-containing protein At1g62670, mitochondrial from Arabidopsis thaliana (Mouse-ear cress).